A 183-amino-acid chain; its full sequence is MIVAIEGIVSKKEPTFVVLKTSSGVSYGVYVSLFCSGNFEKDQKIELSITQIIKEDSHKLYGFLDTNEQRMFELLIKISGIGATTAMALCSSLDTNTFYTALQSGDESVFKKVPGIGPKSAKRIIAELSDAKINIENSNQDHAQALAALLSLGFKQENILKVLRTCESQNTSELIKEALKKLA.

Residues Met-1–Leu-64 are domain I. Residues Asp-65–Ser-138 are domain II. Position 138 (Ser-138) is a region of interest, flexible linker. Residues Ser-138–Ala-183 are domain III.

The protein belongs to the RuvA family. Homotetramer. Forms an RuvA(8)-RuvB(12)-Holliday junction (HJ) complex. HJ DNA is sandwiched between 2 RuvA tetramers; dsDNA enters through RuvA and exits via RuvB. An RuvB hexamer assembles on each DNA strand where it exits the tetramer. Each RuvB hexamer is contacted by two RuvA subunits (via domain III) on 2 adjacent RuvB subunits; this complex drives branch migration. In the full resolvosome a probable DNA-RuvA(4)-RuvB(12)-RuvC(2) complex forms which resolves the HJ.

It localises to the cytoplasm. The RuvA-RuvB-RuvC complex processes Holliday junction (HJ) DNA during genetic recombination and DNA repair, while the RuvA-RuvB complex plays an important role in the rescue of blocked DNA replication forks via replication fork reversal (RFR). RuvA specifically binds to HJ cruciform DNA, conferring on it an open structure. The RuvB hexamer acts as an ATP-dependent pump, pulling dsDNA into and through the RuvAB complex. HJ branch migration allows RuvC to scan DNA until it finds its consensus sequence, where it cleaves and resolves the cruciform DNA. The chain is Holliday junction branch migration complex subunit RuvA from Campylobacter lari (strain RM2100 / D67 / ATCC BAA-1060).